A 1497-amino-acid polypeptide reads, in one-letter code: DNA-directed RNA polymerase subunit beta' (1497 aa).

Zn(2+) is bound by residues C67, C69, C82, and C85. The Mg(2+) site is built by D499, D501, and D503. The Zn(2+) site is built by C867, C943, C950, and C953. The segment at 1476–1497 (ESNATERVVEEPATREGFANER) is disordered. Residues 1482–1497 (RVVEEPATREGFANER) are compositionally biased toward basic and acidic residues.

It belongs to the RNA polymerase beta' chain family. In terms of assembly, the RNAP catalytic core consists of 2 alpha, 1 beta, 1 beta' and 1 omega subunit. When a sigma factor is associated with the core the holoenzyme is formed, which can initiate transcription. Mg(2+) is required as a cofactor. The cofactor is Zn(2+).

The catalysed reaction is RNA(n) + a ribonucleoside 5'-triphosphate = RNA(n+1) + diphosphate. Functionally, DNA-dependent RNA polymerase catalyzes the transcription of DNA into RNA using the four ribonucleoside triphosphates as substrates. The polypeptide is DNA-directed RNA polymerase subunit beta' (Pelodictyon phaeoclathratiforme (strain DSM 5477 / BU-1)).